Consider the following 450-residue polypeptide: Tubulin alpha-6 chain (450 aa).

GTP is bound by residues Gln-11, Glu-71, Gly-144, Thr-145, Thr-179, Asn-206, and Asn-228. Mg(2+) is bound at residue Glu-71. Glu-254 is an active-site residue. Phosphothreonine is present on Thr-349. The tract at residues 430–450 is disordered; sequence KDYEEVGAEGGDDEDDEGEEY. The segment covering 431 to 450 has biased composition (acidic residues); it reads DYEEVGAEGGDDEDDEGEEY.

Belongs to the tubulin family. As to quaternary structure, dimer of alpha and beta chains. A typical microtubule is a hollow water-filled tube with an outer diameter of 25 nm and an inner diameter of 15 nM. Alpha-beta heterodimers associate head-to-tail to form protofilaments running lengthwise along the microtubule wall with the beta-tubulin subunit facing the microtubule plus end conferring a structural polarity. Microtubules usually have 13 protofilaments but different protofilament numbers can be found in some organisms and specialized cells. Interacts with TFCB. The cofactor is Mg(2+). In terms of processing, undergoes a tyrosination/detyrosination cycle, the cyclic removal and re-addition of a C-terminal tyrosine residue by the enzymes tubulin tyrosine carboxypeptidase (TTCP) and tubulin tyrosine ligase (TTL), respectively. Post-translationally, acetylation of alpha chains at Lys-40 stabilizes microtubules and affects affinity and processivity of microtubule motors. This modification has a role in multiple cellular functions, ranging from cell motility, cell cycle progression or cell differentiation to intracellular trafficking and signaling.

The protein resides in the cytoplasm. Its subcellular location is the cytoskeleton. The catalysed reaction is GTP + H2O = GDP + phosphate + H(+). Functionally, tubulin is the major constituent of microtubules, a cylinder consisting of laterally associated linear protofilaments composed of alpha- and beta-tubulin heterodimers. Microtubules grow by the addition of GTP-tubulin dimers to the microtubule end, where a stabilizing cap forms. Below the cap, tubulin dimers are in GDP-bound state, owing to GTPase activity of alpha-tubulin. This Arabidopsis thaliana (Mouse-ear cress) protein is Tubulin alpha-6 chain (TUBA6).